A 148-amino-acid polypeptide reads, in one-letter code: Snaclec B2 (148 aa).

The first 24 residues, 1–24 (MGRLISVSFGLLVVFLSLSGTGAA), serve as a signal peptide directing secretion. 3 disulfides stabilise this stretch: Cys-27–Cys-38, Cys-55–Cys-144, and Cys-121–Cys-136. Residues 34–145 (YDQHCYKVFD…CRLLGHFVCK (112 aa)) enclose the C-type lectin domain.

The protein belongs to the snaclec family. In terms of assembly, heterodimer; disulfide-linked. Expressed by the venom gland.

Its subcellular location is the secreted. In terms of biological role, interferes with one step of hemostasis (modulation of platelet aggregation, or coagulation cascade, for example). This chain is Snaclec B2, found in Macrovipera lebetinus (Levantine viper).